The sequence spans 190 residues: Pyridoxal 5'-phosphate synthase subunit PdxT (190 aa).

46–48 (GES) contacts L-glutamine. Residue Cys78 is the Nucleophile of the active site. Residues Arg108 and 137–138 (IR) contribute to the L-glutamine site. Residues His174 and Glu176 each act as charge relay system in the active site.

It belongs to the glutaminase PdxT/SNO family. In terms of assembly, in the presence of PdxS, forms a dodecamer of heterodimers. Only shows activity in the heterodimer.

The enzyme catalyses aldehydo-D-ribose 5-phosphate + D-glyceraldehyde 3-phosphate + L-glutamine = pyridoxal 5'-phosphate + L-glutamate + phosphate + 3 H2O + H(+). It catalyses the reaction L-glutamine + H2O = L-glutamate + NH4(+). It functions in the pathway cofactor biosynthesis; pyridoxal 5'-phosphate biosynthesis. Its function is as follows. Catalyzes the hydrolysis of glutamine to glutamate and ammonia as part of the biosynthesis of pyridoxal 5'-phosphate. The resulting ammonia molecule is channeled to the active site of PdxS. This chain is Pyridoxal 5'-phosphate synthase subunit PdxT, found in Chloroflexus aggregans (strain MD-66 / DSM 9485).